Reading from the N-terminus, the 497-residue chain is Reticulophagy regulator 1 (497 aa).

The segment at 1–51 is disordered; that stretch reads MASPAPPEHAEEGCPAPAAEEQAPPSPPPPQASPAERQQQEEEAQEAGAAE. At 1–59 the chain is on the cytoplasmic side; it reads MASPAPPEHAEEGCPAPAAEEQAPPSPPPPQASPAERQQQEEEAQEAGAAEGAGLQVEE. The segment covering 13-23 has biased composition (low complexity); it reads GCPAPAAEEQA. The chain crosses the membrane as a helical span at residues 60–80; sequence AAGRAAAAVTWLLGEPVLWLG. Residues 81-95 are Lumenal-facing; the sequence is CRADELLSWKRPLRS. The segment at 84–233 is reticulon homology domain; that stretch reads DELLSWKRPL…LLCAFLCPLF (150 aa). The helical transmembrane segment at 96–116 threads the bilayer; sequence LLGFVAANLLFWFLALTPWRV. Over 117-118 the chain is Cytoplasmic; that stretch reads YH. The chain crosses the membrane as a helical span at residues 119 to 139; sequence LISVMILGRVIMQIIKDMVLS. The Lumenal segment spans residues 140–208; it reads RTRGAQLWRS…LVCSVCTFFT (69 aa). Position 149 is a phosphoserine (serine 149). A Phosphoserine; by CAMK2B modification is found at serine 151. Phosphoserine is present on serine 153. The helical transmembrane segment at 209–229 threads the bilayer; that stretch reads ILGSYIPGVILSYLLLLCAFL. Topologically, residues 230–497 are cytoplasmic; it reads CPLFKCNDIG…GFLSNLLGGH (268 aa). Positions 319 to 330 are enriched in polar residues; sequence FNLSEGYTPQTD. Disordered regions lie at residues 319–365, 377–396, 436–455, and 468–497; these read FNLS…EDEL, KEQLDSGHRPSKETQSAAGL, LSQAAPIPEEDTDTEEGDDF, and SELGLTQDQEAEAQQNKKSSGFLSNLLGGH. Composition is skewed to basic and acidic residues over residues 334-348 and 377-388; these read DLDRPSEEVFSRDLS and KEQLDSGHRPSK. Positions 443–455 are enriched in acidic residues; that stretch reads PEEDTDTEEGDDF. Positions 453 to 458 match the LIR motif motif; that stretch reads DDFELL. Positions 471-490 are enriched in polar residues; sequence GLTQDQEAEAQQNKKSSGFL.

Belongs to the RETREG family. As to quaternary structure, homooligomer; oligomerization is enhanced following endoplasmic reticulum stress and is mediated by the reticulon homology domain. Interacts with ATG8 family modifier proteins MAP1LC3A, MAP1LC3B, MAP1LC3C, GABARAP, GABARAPL1 and GABARAPL2. Shows higher affinity for GABARAPL1 than for MAP1LC3A or MAP1LC3B. Phosphorylation at Ser-151 by CAMK2B enhances oligomerization and membrane scission and reticulophagy activity. As to expression, overexpressed in esophageal squamous cell carcinoma.

Its subcellular location is the golgi apparatus. The protein resides in the cis-Golgi network membrane. It is found in the endoplasmic reticulum membrane. In terms of biological role, endoplasmic reticulum (ER)-anchored autophagy regulator which mediates ER delivery into lysosomes through sequestration into autophagosomes. Promotes membrane remodeling and ER scission via its membrane bending capacity and targets the fragments into autophagosomes via interaction with ATG8 family proteins. Active under basal conditions. Required for collagen quality control in a LIR motif-dependent manner. Required for long-term survival of nociceptive and autonomic ganglion neurons. Its function is as follows. (Microbial infection) During SARS-CoV-2 infection, RETREG1-mediated reticulophagy is promoted by SARS-CoV-2 ORF3A protein. This induces endoplasmic reticulum stress and inflammatory responses and facilitates viral infection. The polypeptide is Reticulophagy regulator 1 (Homo sapiens (Human)).